Consider the following 151-residue polypeptide: SsrA-binding protein (151 aa).

Belongs to the SmpB family.

It localises to the cytoplasm. Functionally, required for rescue of stalled ribosomes mediated by trans-translation. Binds to transfer-messenger RNA (tmRNA), required for stable association of tmRNA with ribosomes. tmRNA and SmpB together mimic tRNA shape, replacing the anticodon stem-loop with SmpB. tmRNA is encoded by the ssrA gene; the 2 termini fold to resemble tRNA(Ala) and it encodes a 'tag peptide', a short internal open reading frame. During trans-translation Ala-aminoacylated tmRNA acts like a tRNA, entering the A-site of stalled ribosomes, displacing the stalled mRNA. The ribosome then switches to translate the ORF on the tmRNA; the nascent peptide is terminated with the 'tag peptide' encoded by the tmRNA and targeted for degradation. The ribosome is freed to recommence translation, which seems to be the essential function of trans-translation. The protein is SsrA-binding protein of Campylobacter fetus subsp. fetus (strain 82-40).